Consider the following 322-residue polypeptide: Transcription initiation factor IIB (322 aa).

2 tandem repeats follow at residues 125 to 213 (SLIN…VRDL) and 224 to 305 (NFVY…EIAQ).

Belongs to the TFIIB family.

Stabilizes TBP binding to an archaeal box-A promoter. Also responsible for recruiting RNA polymerase II to the pre-initiation complex (DNA-TBP-TFIIB). The chain is Transcription initiation factor IIB from Aeropyrum pernix (strain ATCC 700893 / DSM 11879 / JCM 9820 / NBRC 100138 / K1).